Reading from the N-terminus, the 286-residue chain is Ribose-phosphate pyrophosphokinase (286 aa).

ATP-binding positions include 34-36 (DGE) and 91-92 (RQ). His124 and Asp161 together coordinate Mg(2+). Residue Lys184 is part of the active site. D-ribose 5-phosphate-binding positions include Arg186, Asp210, and 214–218 (STGGT).

The protein belongs to the ribose-phosphate pyrophosphokinase family. Class III (archaeal) subfamily. It depends on Mg(2+) as a cofactor.

It localises to the cytoplasm. It carries out the reaction D-ribose 5-phosphate + ATP = 5-phospho-alpha-D-ribose 1-diphosphate + AMP + H(+). The protein operates within metabolic intermediate biosynthesis; 5-phospho-alpha-D-ribose 1-diphosphate biosynthesis; 5-phospho-alpha-D-ribose 1-diphosphate from D-ribose 5-phosphate (route I): step 1/1. Functionally, involved in the biosynthesis of the central metabolite phospho-alpha-D-ribosyl-1-pyrophosphate (PRPP) via the transfer of pyrophosphoryl group from ATP to 1-hydroxyl of ribose-5-phosphate (Rib-5-P). The polypeptide is Ribose-phosphate pyrophosphokinase (Thermoplasma acidophilum (strain ATCC 25905 / DSM 1728 / JCM 9062 / NBRC 15155 / AMRC-C165)).